Reading from the N-terminus, the 91-residue chain is Small ribosomal subunit protein bS20 (91 aa).

This sequence belongs to the bacterial ribosomal protein bS20 family.

In terms of biological role, binds directly to 16S ribosomal RNA. This is Small ribosomal subunit protein bS20 from Caulobacter sp. (strain K31).